A 325-amino-acid chain; its full sequence is Reaction center protein M chain (325 aa).

3 helical membrane-spanning segments follow: residues 53–79 (LGFTGTLSIIFGFMAIFIIGFNMLASV), 111–140 (EGGWWLMAGFFLTMSILLWWVRTYKRAEAL), and 143–168 (SQHLSWAFAAAIFFYLSLGFIRPVMM). The (7R,8Z)-bacteriochlorophyll b site is built by H182 and H202. A helical transmembrane segment spans residues 198–226 (YNPFHMLSIAFLYGSALLFAMHGATILAV). Residues H219 and E234 each contribute to the Fe cation site. Residue W252 coordinates a ubiquinone. Residue H266 coordinates Fe cation.

It belongs to the reaction center PufL/M/PsbA/D family. In terms of assembly, reaction center is composed of four bacteriochlorophylls, two bacteriopheophytins, two ubiquinones, one iron, and two highly hydrophobic polypeptide chains (designated L and M).

Its subcellular location is the cellular chromatophore membrane. Functionally, the reaction center is a membrane-bound complex that mediates the initial photochemical event in the electron transfer process of photosynthesis. This is Reaction center protein M chain (pufM) from Allochromatium vinosum (strain ATCC 17899 / DSM 180 / NBRC 103801 / NCIMB 10441 / D) (Chromatium vinosum).